The sequence spans 159 residues: Putative ribosomal RNA large subunit methyltransferase H (159 aa).

S-adenosyl-L-methionine contacts are provided by residues Leu76, Gly108, and Phe127–Phe132.

The protein belongs to the RNA methyltransferase RlmH family.

It localises to the cytoplasm. It carries out the reaction pseudouridine(1915) in 23S rRNA + S-adenosyl-L-methionine = N(3)-methylpseudouridine(1915) in 23S rRNA + S-adenosyl-L-homocysteine + H(+). Specifically methylates the pseudouridine at position 1915 (m3Psi1915) in 23S rRNA. The sequence is that of Putative ribosomal RNA large subunit methyltransferase H from Methanococcus maripaludis (strain C5 / ATCC BAA-1333).